The sequence spans 741 residues: uncharacterized protein (741 aa).

Positions 1-17 (MDSNTNENNSHASSNER) are enriched in polar residues. Residues 1 to 50 (MDSNTNENNSHASSNERQSSEGHDDYLNRNPNSEATEGEEGTHPTTGTQP) form a disordered region. Positions 18–27 (QSSEGHDDYL) are enriched in basic and acidic residues. An RING-type 1; degenerate zinc finger spans residues 107–150 (CPICYDDMNENDEKQATKMPCGHIFGKNCLQKWLENHCTCPLCR). 3 stretches are compositionally biased toward polar residues: residues 177 to 193 (GNQG…SNGV), 252 to 263 (PDSNTSTPTTRS), and 277 to 302 (NASS…NAFF). Disordered stretches follow at residues 177–214 (GNQG…RTGV), 238–387 (SATN…NTNR), 500–543 (QPAV…PGIT), 561–619 (ENRM…TPTH), 638–688 (STPS…PQCQ), and 713–741 (RCQQ…EEHK). The span at 316–332 (TSNLTSNSGSMTNSTST) shows a compositional bias: low complexity. Polar residues-rich tracts occupy residues 333-344 (DLPTSNLPSQNA) and 357-386 (PPNL…ANTN). 3 stretches are compositionally biased toward polar residues: residues 563-586 (RMNQ…SINV), 604-619 (ENSS…TPTH), and 652-661 (SKVSSGTSTP). The RING-type 2; degenerate zinc finger occupies 687 to 736 (CQLEDQGICDPNDRFVHFECGHSVHERCQQSTSNSENQMDEEIGECPKCR). Positions 731–741 (ECPKCRNEEHK) are enriched in basic and acidic residues.

It is found in the nucleus. This is an uncharacterized protein from Schizosaccharomyces pombe (strain 972 / ATCC 24843) (Fission yeast).